The chain runs to 262 residues: Apolipoprotein A-I (262 aa).

The first 18 residues, 1–18 (MKFLALALTILLAAATQA), serve as a signal peptide directing secretion. A 3 X approximate tandem repeats region spans residues 32-63 (VKVAMMEYMAQVKETGQRSIDLLDDTEFKEYK). 2 tandem repeats follow at residues 64 to 85 (VQLS…QSLA) and 87 to 107 (YSEA…AEVM). Positions 64–262 (VQLSQSLDNL…YETISQAMKA (199 aa)) are 10 X approximate tandem repeats. The stretch at 108–118 (KDVEDVRTQLE) is one 3; half-length repeat. 5 consecutive repeat copies span residues 119 to 140 (PKRA…KKLE), 141 to 162 (PLIK…VKME), 163 to 184 (PVVE…AKLM), 185 to 206 (PIVE…TLAA), and 207 to 228 (PYAE…EKVG). The 9; half-length repeat unit spans residues 229 to 239 (PLTNDFKGQVG). The stretch at 240 to 262 (PAAEQAKEKLMDFYETISQAMKA) is repeat 10.

It belongs to the apolipoprotein A1/A4/E family.

It is found in the secreted. Functionally, participates in the reverse transport of cholesterol from tissues to the liver for excretion by promoting cholesterol efflux from tissues and by acting as a cofactor for the lecithin cholesterol acyltransferase (LCAT). The sequence is that of Apolipoprotein A-I (apoa1) from Salmo trutta (Brown trout).